Here is a 642-residue protein sequence, read N- to C-terminus: Uromodulin (642 aa).

The N-terminal stretch at 1-26 is a signal peptide; the sequence is MGQLSSLTSVWMVVVVTSWVIIAANI. The EGF-like 1 domain maps to 32 to 64; the sequence is RSCSECHSNATCMEDGMVTTCSCLVGFTGSGFE. Intrachain disulfides connect C34–C43, C37–C52, C54–C65, C71–C85, C79–C94, C96–C108, C114–C128, C122–C137, C139–C150, C152–C163, C157–C172, C176–C269, C197–C284, C219–C257, C225–C289, C250–C258, C299–C308, C302–C317, C319–C348, C336–C426, and C367–C390. An N-linked (GlcNAc...) asparagine glycan is attached at N40. The 43-residue stretch at 67-109 folds into the EGF-like 2; calcium-binding domain; the sequence is DLDECAIPGAHNCSEGSSCMNTLGSYLCTCPDGFRLTPGLGCI. A glycan (N-linked (GlcNAc...) asparagine) is linked at N78. One can recognise an EGF-like 3; calcium-binding domain in the interval 110 to 151; the sequence is DVDECSEPGLSRCHALATCINNKGNYSCVCPAGYRGDGQHCE. A glycan (N-linked (GlcNAc...) asparagine) is linked at N134. Residues 152 to 173 form a beta hairpin region; the sequence is CSPGSCGPGLDCVPVGDALVCA. Residues 174–293 form a D10C region; sequence DPCQEHRILD…CYLAYCTDPT (120 aa). Residues N234 and N246 are each glycosylated (N-linked (GlcNAc...) asparagine). N277 is a glycosylation site (N-linked (GlcNAc...) asparagine). The EGF-like 4 domain occupies 294-325; that stretch reads SVLGTCEECSVEEDCKSHDGMWSCQCKQDFNV. An N-linked (GlcNAc...) asparagine glycan is attached at N324. The tract at residues 335 to 430 is ZP-N; sequence ECRPNDIKVS…KINFECSYPL (96 aa). Residues 335 to 590 form the ZP domain; the sequence is ECRPNDIKVS…PTCSGTRFRS (256 aa). Residues N397 and N448 are each glycosylated (N-linked (GlcNAc...) asparagine). The flexible ZP-N/ZP-C linker; important for secretion and polymerization into filaments stretch occupies residues 431 to 454; the sequence is DMKVSLETSLQPIVSSLNISVGGT. The segment at 455–465 is internal hydrophobic patch (IHP); it reads GMFTVRMALFQ. The tract at residues 455 to 590 is ZP-C; the sequence is GMFTVRMALF…PTCSGTRFRS (136 aa). Disulfide bonds link C507/C567, C528/C583, and C572/C579. N-linked (GlcNAc...) asparagine glycosylation is present at N514. Residues 587 to 590 form an essential for cleavage by HPN region; it reads RFRS. The interval 599–607 is external hydrophobic patch (EHP); regulates polymerization into filaments; the sequence is VLNLGPITR. Residue S620 is the site of GPI-anchor amidated serine attachment. The propeptide at 621–642 is removed in mature form; the sequence is SLGFLKVCLPLLLSATLTLMFQ.

As to quaternary structure, homodimer that then polymerizes into long filaments. The filaments can additionally assemble laterally to form a sheet. The filaments consist of a zigzag-shaped backbone with laterally protruding arms which interact with bacterial adhesin fimH. Two fimH molecules can bind to a single UMOD monomer. In terms of processing, N-glycosylated. Post-translationally, proteolytically cleaved at a conserved C-terminal proteolytic cleavage site to generate the secreted form found in urine. This cleavage is catalyzed by HPN. Detected in kidney and pancreas.

The protein localises to the apical cell membrane. Its subcellular location is the basolateral cell membrane. The protein resides in the cell projection. It is found in the cilium membrane. It localises to the secreted. In terms of biological role, functions in biogenesis and organization of the apical membrane of epithelial cells of the thick ascending limb of Henle's loop (TALH), where it promotes formation of complex filamentous gel-like structure that may play a role in the water barrier permeability. May serve as a receptor for binding and endocytosis of cytokines (IL-1, IL-2) and TNF. Facilitates neutrophil migration across renal epithelia. Its function is as follows. In the urine, may contribute to colloid osmotic pressure, retards passage of positively charged electrolytes, and inhibits formation of liquid containing supersaturated salts and subsequent formation of salt crystals. Protects against urinary tract infections by binding to type 1 fimbriated E.coli. Binds to bacterial adhesin fimH which mediates the stable formation of bacterial aggregates, prevents the binding of E.coli to uroplakins UPK1A and UPK1B which act as urothelial receptors for type I fimbriae, and allows for pathogen clearance through micturation. Also promotes aggregation of other bacteria including K.pneumoniae, P.aeruginosa and S.mitis and so may also protect against other uropathogens. The polypeptide is Uromodulin (UMOD) (Canis lupus familiaris (Dog)).